Reading from the N-terminus, the 144-residue chain is Large ribosomal subunit protein uL15 (144 aa).

Positions 1–57 (MKLNDLSPAPGSRREKHRPGRGIGSGLGKTGGRGHKGQTSRSGGSIAPGFEGGQQPL) are disordered. A compositionally biased stretch (gly residues) spans 21 to 31 (RGIGSGLGKTG).

Belongs to the universal ribosomal protein uL15 family. In terms of assembly, part of the 50S ribosomal subunit.

Binds to the 23S rRNA. The chain is Large ribosomal subunit protein uL15 from Pseudomonas putida (strain ATCC 700007 / DSM 6899 / JCM 31910 / BCRC 17059 / LMG 24140 / F1).